The chain runs to 609 residues: Glutamine--fructose-6-phosphate aminotransferase [isomerizing] (609 aa).

Cys-2 functions as the Nucleophile; for GATase activity in the catalytic mechanism. The Glutamine amidotransferase type-2 domain maps to 2-218 (CGIVGAIAQR…EGDIAEITRR (217 aa)). 2 consecutive SIS domains span residues 286 to 426 (ADEL…LKGL) and 458 to 599 (LAED…VDQP). Residue Lys-604 is the For Fru-6P isomerization activity of the active site.

As to quaternary structure, homodimer.

The protein localises to the cytoplasm. It catalyses the reaction D-fructose 6-phosphate + L-glutamine = D-glucosamine 6-phosphate + L-glutamate. Catalyzes the first step in hexosamine metabolism, converting fructose-6P into glucosamine-6P using glutamine as a nitrogen source. The polypeptide is Glutamine--fructose-6-phosphate aminotransferase [isomerizing] (Escherichia coli O6:H1 (strain CFT073 / ATCC 700928 / UPEC)).